The sequence spans 180 residues: Large ribosomal subunit protein uL6 (180 aa).

The protein belongs to the universal ribosomal protein uL6 family. In terms of assembly, part of the 50S ribosomal subunit.

Functionally, this protein binds to the 23S rRNA, and is important in its secondary structure. It is located near the subunit interface in the base of the L7/L12 stalk, and near the tRNA binding site of the peptidyltransferase center. This Clostridium botulinum (strain Okra / Type B1) protein is Large ribosomal subunit protein uL6.